We begin with the raw amino-acid sequence, 275 residues long: Melanoma-associated antigen B5 (275 aa).

The disordered stretch occupies residues 1 to 33 (MTSAGVFNAGSDERANSRDEEYPCSSEVSPSTE). The segment covering 11–21 (SDERANSRDEE) has biased composition (basic and acidic residues). Over residues 23–33 (PCSSEVSPSTE) the composition is skewed to low complexity. The region spanning 40–239 (INIKVGLLEQ…GAFSSQYEEA (200 aa)) is the MAGE domain.

As to expression, expressed in testis. Not expressed in other normal tissues, but is expressed in tumors of different histological origins.

The polypeptide is Melanoma-associated antigen B5 (MAGEB5) (Homo sapiens (Human)).